An 84-amino-acid chain; its full sequence is Large ribosomal subunit protein bL31B (84 aa).

Belongs to the bacterial ribosomal protein bL31 family. Type B subfamily. In terms of assembly, part of the 50S ribosomal subunit.

Binds the 23S rRNA. The chain is Large ribosomal subunit protein bL31B from Rhodococcus jostii (strain RHA1).